The chain runs to 479 residues: Poly(A) polymerase catalytic subunit (479 aa).

Residues aspartate 202 and aspartate 204 contribute to the active site. Ca(2+) contacts are provided by aspartate 202, aspartate 204, and aspartate 253.

Belongs to the poxviridae poly(A) polymerase catalytic subunit family. As to quaternary structure, heterodimer of a large (catalytic) subunit and a small (regulatory) subunit.

The catalysed reaction is RNA(n) + ATP = RNA(n)-3'-adenine ribonucleotide + diphosphate. Polymerase that creates the 3'-poly(A) tail of mRNA's. The sequence is that of Poly(A) polymerase catalytic subunit (OPG063) from Camelus.